A 570-amino-acid chain; its full sequence is Proline--tRNA ligase (570 aa).

The protein belongs to the class-II aminoacyl-tRNA synthetase family. ProS type 1 subfamily. Homodimer.

The protein localises to the cytoplasm. The catalysed reaction is tRNA(Pro) + L-proline + ATP = L-prolyl-tRNA(Pro) + AMP + diphosphate. Catalyzes the attachment of proline to tRNA(Pro) in a two-step reaction: proline is first activated by ATP to form Pro-AMP and then transferred to the acceptor end of tRNA(Pro). As ProRS can inadvertently accommodate and process non-cognate amino acids such as alanine and cysteine, to avoid such errors it has two additional distinct editing activities against alanine. One activity is designated as 'pretransfer' editing and involves the tRNA(Pro)-independent hydrolysis of activated Ala-AMP. The other activity is designated 'posttransfer' editing and involves deacylation of mischarged Ala-tRNA(Pro). The misacylated Cys-tRNA(Pro) is not edited by ProRS. This chain is Proline--tRNA ligase, found in Thermoanaerobacter sp. (strain X514).